Here is a 444-residue protein sequence, read N- to C-terminus: Xaa-Pro dipeptidase (444 aa).

Residues Asp-247, Asp-258, His-340, Glu-385, and Glu-424 each coordinate Mn(2+).

This sequence belongs to the peptidase M24B family. Bacterial-type prolidase subfamily. Requires Mn(2+) as cofactor.

It catalyses the reaction Xaa-L-Pro dipeptide + H2O = an L-alpha-amino acid + L-proline. Splits dipeptides with a prolyl residue in the C-terminal position. This Proteus mirabilis (strain HI4320) protein is Xaa-Pro dipeptidase.